Here is a 116-residue protein sequence, read N- to C-terminus: uncharacterized protein (116 aa).

A helical transmembrane segment spans residues Val-89–Ile-109.

This sequence belongs to the M.jannaschii MJ0023/MJ0349/MJ1072/MJ1074/MJ1107/MJECL16 family.

The protein resides in the membrane. This is an uncharacterized protein from Methanocaldococcus jannaschii (strain ATCC 43067 / DSM 2661 / JAL-1 / JCM 10045 / NBRC 100440) (Methanococcus jannaschii).